The chain runs to 504 residues: D-alanine--D-alanyl carrier protein ligase (504 aa).

152-153 is a binding site for ATP; that stretch reads TS. Asp197 serves as a coordination point for D-alanine. ATP is bound at residue 292 to 297; sequence NTYGPT. Val301 contacts D-alanine. ATP-binding positions include Asp383, 394 to 397, and Lys492; that span reads YNGR. Lys492 is a binding site for D-alanine.

It belongs to the ATP-dependent AMP-binding enzyme family. DltA subfamily.

It localises to the cytoplasm. The catalysed reaction is holo-[D-alanyl-carrier protein] + D-alanine + ATP = D-alanyl-[D-alanyl-carrier protein] + AMP + diphosphate. The protein operates within cell wall biogenesis; lipoteichoic acid biosynthesis. Its function is as follows. Catalyzes the first step in the D-alanylation of lipoteichoic acid (LTA), the activation of D-alanine and its transfer onto the D-alanyl carrier protein (Dcp) DltC. In an ATP-dependent two-step reaction, forms a high energy D-alanyl-AMP intermediate, followed by transfer of the D-alanyl residue as a thiol ester to the phosphopantheinyl prosthetic group of the Dcp. D-alanylation of LTA plays an important role in modulating the properties of the cell wall in Gram-positive bacteria, influencing the net charge of the cell wall. This chain is D-alanine--D-alanyl carrier protein ligase, found in Bacillus cereus (strain ZK / E33L).